A 240-amino-acid chain; its full sequence is Orotidine 5'-phosphate decarboxylase (240 aa).

Substrate is bound by residues D15, K37, 64 to 73, T127, R188, Q197, G217, and R218; that span reads DLKYHDIPNT. K66 acts as the Proton donor in catalysis.

It belongs to the OMP decarboxylase family. Type 1 subfamily. Homodimer.

The catalysed reaction is orotidine 5'-phosphate + H(+) = UMP + CO2. The protein operates within pyrimidine metabolism; UMP biosynthesis via de novo pathway; UMP from orotate: step 2/2. Its function is as follows. Catalyzes the decarboxylation of orotidine 5'-monophosphate (OMP) to uridine 5'-monophosphate (UMP). This is Orotidine 5'-phosphate decarboxylase from Geobacter sp. (strain M21).